A 215-amino-acid polypeptide reads, in one-letter code: Pyridoxine/pyridoxamine 5'-phosphate oxidase (215 aa).

Substrate-binding positions include 11–14 (RRDY) and Lys-69. FMN is bound by residues 64 to 69 (RVVLLK), 79 to 80 (YT), Lys-86, and Gln-108. Residues Tyr-126, Arg-130, and Ser-134 each coordinate substrate. Residues 143–144 (QS) and Trp-188 each bind FMN. 194–196 (RLH) contacts substrate. Position 198 (Arg-198) interacts with FMN.

This sequence belongs to the pyridoxamine 5'-phosphate oxidase family. In terms of assembly, homodimer. FMN is required as a cofactor.

The catalysed reaction is pyridoxamine 5'-phosphate + O2 + H2O = pyridoxal 5'-phosphate + H2O2 + NH4(+). It carries out the reaction pyridoxine 5'-phosphate + O2 = pyridoxal 5'-phosphate + H2O2. It functions in the pathway cofactor metabolism; pyridoxal 5'-phosphate salvage; pyridoxal 5'-phosphate from pyridoxamine 5'-phosphate: step 1/1. Its pathway is cofactor metabolism; pyridoxal 5'-phosphate salvage; pyridoxal 5'-phosphate from pyridoxine 5'-phosphate: step 1/1. In terms of biological role, catalyzes the oxidation of either pyridoxine 5'-phosphate (PNP) or pyridoxamine 5'-phosphate (PMP) into pyridoxal 5'-phosphate (PLP). In Legionella pneumophila (strain Lens), this protein is Pyridoxine/pyridoxamine 5'-phosphate oxidase.